Consider the following 105-residue polypeptide: Large ribosomal subunit protein bL21 (105 aa).

The protein belongs to the bacterial ribosomal protein bL21 family. As to quaternary structure, part of the 50S ribosomal subunit. Contacts protein L20.

Its function is as follows. This protein binds to 23S rRNA in the presence of protein L20. This Rhizobium etli (strain CIAT 652) protein is Large ribosomal subunit protein bL21.